Consider the following 343-residue polypeptide: 4-hydroxy-2-oxovalerate aldolase 1 (343 aa).

The 253-residue stretch at 8–260 (VTVHDMTLRD…ETGVDVAKIT (253 aa)) folds into the Pyruvate carboxyltransferase domain. Residue 16 to 17 (RD) participates in substrate binding. Position 17 (Asp17) interacts with Mn(2+). His20 functions as the Proton acceptor in the catalytic mechanism. Residues Ser170 and His199 each contribute to the substrate site. His199 and His201 together coordinate Mn(2+). Tyr290 is a binding site for substrate.

It belongs to the 4-hydroxy-2-oxovalerate aldolase family.

The enzyme catalyses (S)-4-hydroxy-2-oxopentanoate = acetaldehyde + pyruvate. This is 4-hydroxy-2-oxovalerate aldolase 1 from Dechloromonas aromatica (strain RCB).